A 799-amino-acid chain; its full sequence is Phenylalanine--tRNA ligase beta subunit (799 aa).

The tRNA-binding domain maps to 40-147 (KSHLSSVITV…KDTTLGISVR (108 aa)). Residues 402-479 (SKTVTIETNL…RTIGYASIRT (78 aa)) form the B5 domain. Mg(2+) contacts are provided by Asp-457, Asp-463, Glu-466, and Glu-467. An FDX-ACB domain is found at 707–799 (SHFPQGQLDL…TAKSNGYSLR (93 aa)).

It belongs to the phenylalanyl-tRNA synthetase beta subunit family. Type 1 subfamily. As to quaternary structure, tetramer of two alpha and two beta subunits. The cofactor is Mg(2+).

It is found in the cytoplasm. The enzyme catalyses tRNA(Phe) + L-phenylalanine + ATP = L-phenylalanyl-tRNA(Phe) + AMP + diphosphate + H(+). The chain is Phenylalanine--tRNA ligase beta subunit from Leptospira biflexa serovar Patoc (strain Patoc 1 / Ames).